We begin with the raw amino-acid sequence, 1095 residues long: DNA-directed RNA polymerase subunit beta (1095 aa).

The interval 1069 to 1095 (DLMQDVNPRRSTPSRPTYESLGKEYEE) is disordered.

This sequence belongs to the RNA polymerase beta chain family. In terms of assembly, in cyanobacteria the RNAP catalytic core is composed of 2 alpha, 1 beta, 1 beta', 1 gamma and 1 omega subunit. When a sigma factor is associated with the core the holoenzyme is formed, which can initiate transcription.

The enzyme catalyses RNA(n) + a ribonucleoside 5'-triphosphate = RNA(n+1) + diphosphate. In terms of biological role, DNA-dependent RNA polymerase catalyzes the transcription of DNA into RNA using the four ribonucleoside triphosphates as substrates. The polypeptide is DNA-directed RNA polymerase subunit beta (Prochlorococcus marinus (strain NATL1A)).